The following is a 160-amino-acid chain: Ribosomal RNA large subunit methyltransferase H (160 aa).

L76 and G108 together coordinate S-adenosyl-L-methionine.

Belongs to the RNA methyltransferase RlmH family. Homodimer.

It is found in the cytoplasm. It carries out the reaction pseudouridine(1915) in 23S rRNA + S-adenosyl-L-methionine = N(3)-methylpseudouridine(1915) in 23S rRNA + S-adenosyl-L-homocysteine + H(+). Specifically methylates the pseudouridine at position 1915 (m3Psi1915) in 23S rRNA. This Rhodopseudomonas palustris (strain TIE-1) protein is Ribosomal RNA large subunit methyltransferase H.